The primary structure comprises 99 residues: Protein S100-Z (99 aa).

EF-hand domains are found at residues Ile13–Cys48 and Lys50–Ala85. Residues Ser20, Glu23, Lys28, Glu33, Asp63, Asn65, Asp67, Glu69, and Glu74 each contribute to the Ca(2+) site.

The protein belongs to the S-100 family. As to quaternary structure, homodimer. Interacts with S100P. In terms of tissue distribution, highest level of expression in spleen and leukocytes.

The polypeptide is Protein S100-Z (Homo sapiens (Human)).